Here is a 492-residue protein sequence, read N- to C-terminus: Probable cytochrome P450 313a1 (492 aa).

Cys438 provides a ligand contact to heme.

The protein belongs to the cytochrome P450 family. Heme is required as a cofactor.

It is found in the endoplasmic reticulum membrane. The protein resides in the microsome membrane. Functionally, may be involved in the metabolism of insect hormones and in the breakdown of synthetic insecticides. This is Probable cytochrome P450 313a1 (Cyp313a1) from Drosophila melanogaster (Fruit fly).